A 183-amino-acid chain; its full sequence is UPF0302 protein BH3876 (183 aa).

It belongs to the UPF0302 family.

This chain is UPF0302 protein BH3876, found in Halalkalibacterium halodurans (strain ATCC BAA-125 / DSM 18197 / FERM 7344 / JCM 9153 / C-125) (Bacillus halodurans).